The primary structure comprises 148 residues: Translation initiation factor 2 subunit beta (148 aa).

It belongs to the eIF-2-beta/eIF-5 family. Heterotrimer composed of an alpha, a beta and a gamma chain.

Functionally, eIF-2 functions in the early steps of protein synthesis by forming a ternary complex with GTP and initiator tRNA. This chain is Translation initiation factor 2 subunit beta (eif2b), found in Aeropyrum pernix (strain ATCC 700893 / DSM 11879 / JCM 9820 / NBRC 100138 / K1).